A 252-amino-acid polypeptide reads, in one-letter code: Uracil-DNA glycosylase (252 aa).

The Proton acceptor role is filled by Asp78.

This sequence belongs to the uracil-DNA glycosylase (UDG) superfamily. UNG family.

It is found in the cytoplasm. The catalysed reaction is Hydrolyzes single-stranded DNA or mismatched double-stranded DNA and polynucleotides, releasing free uracil.. Excises uracil residues from the DNA which can arise as a result of misincorporation of dUMP residues by DNA polymerase or due to deamination of cytosine. This Bordetella avium (strain 197N) protein is Uracil-DNA glycosylase.